The chain runs to 887 residues: MWTPRAPPPRPALLFLLLLLLRVTHGLFPDEPPPLSVAPRDYLSHYPVFVGSGPGRLTPAEGAEDLNIQRVLRVNRTLFIGDRDNLYQVELEPSTSTELRYQRKLTWRSNPSDIDVCRMKGKQEGECRNFVKVLLLRDESTLFVCGSNAFNPICANYSMDTLQLLGDNISGMARCPYDPKHANVALFSDGMLFTATVTDFLAIDAVIYRSLGDRPTLRTVKHDSKWFKEPYFVHAVEWGSHVYFFFREIAMEFNYLEKVVVSRVARVCKNDVGGSPRVLEKQWTSFLKARLNCSVPGDSHFYFNVLQAVTGVVSLGGRPVILAVFSTPSNSIPGSAVCAFDMNQVAAVFEGRFREQKSPESIWTPVPEDQVPRPRPGCCAAPGMQYNASNALPDEILNFVKTHPLMDEAVPSLGHSPWIVRTLIRHQLTRVAVDVGAGPWGNQTIVFLGSEVGTVLKFLVKPNASVSGTTGPSIFLEEFETYRPDRCGRSSSAGEWGQRLLSLELDAASGGLLAAFPRCVVRVPVARCQLYSGCMKNCIGSQDPYCGWAPDGSCIFLRPGTSATFEQDVSGASTSGLGDCTGLLRASLSDDRAGLVSVNLLVTSSVAAFVVGAVVSGFSVGWFVGLRERRELARRKDKEAILAHGGSEAVLSVSRLGERRGTGTGGRGGAGGGPGGPPEALLAPLMQNGWTKAALLHGGPHDLDSGLLPTPEQTPLPQKRLPTTHPHAHALGPRAWDHSHALLSASASTSLLLLAHTRAPEQPPVPTESGPESRLCAPRSCRASHPGDFPLTPHASPDRRRVVSAPTGPLDSSSVGDDLPGPWSPPATSSLRRPGPHGPPTAALRRTHTFNSGEARPGGHRPRRHAPADSTHLLPCGTGERTAPPVP.

The N-terminal stretch at 1–26 is a signal peptide; it reads MWTPRAPPPRPALLFLLLLLLRVTHG. At 27-605 the chain is on the extracellular side; the sequence is LFPDEPPPLS…VSVNLLVTSS (579 aa). The region spanning 32–525 is the Sema domain; the sequence is PPPLSVAPRD…FPRCVVRVPV (494 aa). An N-linked (GlcNAc...) asparagine glycan is attached at Asn-75. Disulfide bonds link Cys-117–Cys-127 and Cys-145–Cys-154. N-linked (GlcNAc...) asparagine glycosylation is found at Asn-156, Asn-168, and Asn-292. Disulfide bonds link Cys-268/Cys-379 and Cys-293/Cys-338. N-linked (GlcNAc...) asparagine glycans are attached at residues Asn-387, Asn-442, and Asn-463. Intrachain disulfides connect Cys-487–Cys-519, Cys-528–Cys-546, Cys-534–Cys-580, and Cys-538–Cys-554. The helical transmembrane segment at 606–626 threads the bilayer; the sequence is VAAFVVGAVVSGFSVGWFVGL. Residues 627–887 lie on the Cytoplasmic side of the membrane; sequence RERRELARRK…TGERTAPPVP (261 aa). 3 disordered regions span residues 656–675, 697–717, and 759–887; these read LGERRGTGTGGRGGAGGGPG, HGGPHDLDSGLLPTPEQTPLP, and APEQ…PPVP. Gly residues predominate over residues 662–674; it reads TGTGGRGGAGGGP. Residue Arg-667 is modified to Omega-N-methylarginine. Residues 707 to 717 show a composition bias toward low complexity; that stretch reads LLPTPEQTPLP.

The protein belongs to the semaphorin family.

It localises to the cell membrane. In terms of biological role, functions as a cell surface repellent for mossy fibers of developing neurons in the hippocampus where it plays a role in axon guidance. May function through the PLXNA4 receptor expressed by mossy cell axons. The polypeptide is Semaphorin-6B (Sema6b) (Rattus norvegicus (Rat)).